The sequence spans 323 residues: Serine racemase (323 aa).

S32, S33, and K52 together coordinate ATP. The active-site Proton acceptor is K57. K57 carries the lysino-D-alanine (Lys); alternate modification. Residue K57 is modified to N6-(pyridoxal phosphate)lysine; alternate. Residue T79 participates in Ca(2+) binding. S82 acts as the Proton acceptor in catalysis. Residue N84 participates in pyridoxal 5'-phosphate binding. ATP-binding residues include Q87 and Y119. Position 176 (D176) interacts with Mg(2+). Pyridoxal 5'-phosphate-binding residues include G183, G184, G185, G186, and L187. 3 residues coordinate Ca(2+): E208, G212, and D214. Mg(2+) is bound by residues E208, G212, and D214. Mn(2+)-binding residues include E208, G212, and D214. K277 is a binding site for ATP. S308 provides a ligand contact to pyridoxal 5'-phosphate. ATP is bound at residue N311.

It belongs to the serine/threonine dehydratase family. In terms of assembly, homodimer. It depends on Mg(2+) as a cofactor. Mn(2+) is required as a cofactor. The cofactor is Ca(2+). Pyridoxal 5'-phosphate serves as cofactor. Post-translationally, modification of the active site Lys by its substrate Ser to lysino-D-alanine reduces but does not abolish enzyme activity.

It catalyses the reaction L-serine = D-serine. It carries out the reaction L-serine = pyruvate + NH4(+). The catalysed reaction is D-serine = pyruvate + NH4(+). Its activity is regulated as follows. Allosterically activated by ATP, by magnesium, and possibly also by other divalent metal cations. Catalyzes the synthesis of D-serine from L-serine. Has dehydratase activity towards both L-serine and D-serine. The polypeptide is Serine racemase (Schizosaccharomyces pombe (strain 972 / ATCC 24843) (Fission yeast)).